The chain runs to 357 residues: SPbeta prophage-derived pesticidal crystal protein-like YokG (357 aa).

The protein belongs to the cry6A endotoxin family.

The protein is SPbeta prophage-derived pesticidal crystal protein-like YokG (yokG) of Bacillus subtilis (strain 168).